We begin with the raw amino-acid sequence, 67 residues long: MSLFPVIVVFGLSFPPIFFKLLLSLAIFWLVRRMLVPTGIYDFVWHPALFNTALYCCLFYLISRLFV.

2 helical membrane-spanning segments follow: residues 3 to 23 (LFPV…KLLL) and 43 to 63 (FVWH…YLIS).

Belongs to the AaeX family.

Its subcellular location is the cell membrane. This Salmonella gallinarum (strain 287/91 / NCTC 13346) protein is Protein AaeX.